The primary structure comprises 256 residues: Transcription factor bHLH131 (256 aa).

The bHLH domain occupies 91-140 (VAAKKHSDAERRRRLRINSQFATLRTILPNLVKQDKASVLGETVRYFNEL).

In terms of assembly, homodimer.

It localises to the nucleus. The polypeptide is Transcription factor bHLH131 (BHLH131) (Arabidopsis thaliana (Mouse-ear cress)).